Here is a 312-residue protein sequence, read N- to C-terminus: Malate dehydrogenase (312 aa).

NAD(+) is bound by residues 7–13 (GAAGGIG) and Asp-34. 2 residues coordinate substrate: Arg-81 and Arg-87. NAD(+) is bound by residues Asn-94 and 117–119 (ITN). Asn-119 and Arg-153 together coordinate substrate. Catalysis depends on His-177, which acts as the Proton acceptor. Met-227 serves as a coordination point for NAD(+).

Belongs to the LDH/MDH superfamily. MDH type 1 family. In terms of assembly, homodimer.

It carries out the reaction (S)-malate + NAD(+) = oxaloacetate + NADH + H(+). Catalyzes the reversible oxidation of malate to oxaloacetate. This is Malate dehydrogenase from Escherichia coli (strain 55989 / EAEC).